The following is a 119-amino-acid chain: Membrane-anchored ubiquitin-fold protein 1 (119 aa).

Residues 9 to 75 (FEIKFRLPDG…LENNKTLSEC (67 aa)) enclose the Ubiquitin-like domain. The residue at position 116 (Cys-116) is a Cysteine methyl ester. Cys-116 is lipidated: S-farnesyl cysteine. Positions 117 to 119 (SIM) are cleaved as a propeptide — removed in mature form.

Its subcellular location is the cell membrane. Functionally, may serve as docking site to facilitate the association of other proteins to the plasma membrane. This chain is Membrane-anchored ubiquitin-fold protein 1 (MUB1), found in Oryza sativa subsp. japonica (Rice).